A 253-amino-acid polypeptide reads, in one-letter code: ER membrane protein complex subunit 3 (253 aa).

3 helical membrane-spanning segments follow: residues 10-30 (WVLLPISIVMVLTGVLKQYIM), 126-146 (FIPQTIIMWWVNHFFAGFILM), and 176-196 (SISWYFISVLGLNPVYNLIGL).

The protein belongs to the EMC3 family. As to quaternary structure, component of the ER membrane protein complex (EMC), which is composed of EMC1, EMC2, EMC3, EMC4, EMC5 and EMC6.

It is found in the endoplasmic reticulum membrane. Its function is as follows. The EMC seems to be required for efficient folding of proteins in the endoplasmic reticulum (ER). The polypeptide is ER membrane protein complex subunit 3 (AIM27) (Saccharomyces cerevisiae (strain YJM789) (Baker's yeast)).